Reading from the N-terminus, the 521-residue chain is Medium/long-chain-fatty-acid--[acyl-carrier-protein] ligase MbtM (521 aa).

Belongs to the ATP-dependent AMP-binding enzyme family.

It carries out the reaction a long-chain fatty acid + holo-[ACP] + ATP = a long-chain fatty acyl-[ACP] + AMP + diphosphate. The catalysed reaction is a medium-chain fatty acid + holo-[ACP] + ATP = a medium-chain fatty acyl-[ACP] + AMP + diphosphate. The protein operates within siderophore biosynthesis; mycobactin biosynthesis. Activates lipidic moieties required for mycobactin biosynthesis. Converts medium- to long-chain aliphatic fatty acids into acyl adenylate, which is further transferred on to the phosphopantetheine arm of the carrier protein MbtL. This chain is Medium/long-chain-fatty-acid--[acyl-carrier-protein] ligase MbtM (mbtM), found in Mycobacterium sp. (strain MCS).